Consider the following 570-residue polypeptide: Frizzled-2 (570 aa).

Positions 1-28 are cleaved as a signal peptide; it reads MRARSALPRSALPRLLLPLLLLPAAGPA. Topologically, residues 29–252 are extracellular; it reads QFHGEKGISI…QEETRFARLW (224 aa). Residues 39-158 form the FZ domain; sequence PDHGFCQPIS…HGAEQICVGQ (120 aa). Cystine bridges form between C44/C105, C52/C98, C89/C126, C115/C155, and C119/C143. The N-linked (GlcNAc...) asparagine glycan is linked to N58. An N-linked (GlcNAc...) asparagine glycan is attached at N159. A disordered region spans residues 166 to 194; sequence PALLTTAPPSGLQPGAGGTPGGPGGGGSP. Over residues 179–193 the composition is skewed to gly residues; that stretch reads PGAGGTPGGPGGGGS. Residues 253 to 273 traverse the membrane as a helical segment; the sequence is ILTWSVLCCASTFFTVTTYLV. Topologically, residues 274–284 are cytoplasmic; the sequence is DMQRFRYPERP. The helical transmembrane segment at 285-305 threads the bilayer; that stretch reads IIFLSGCYTMVSVAYIAGFVL. Residues 306–332 lie on the Extracellular side of the membrane; it reads QERVVCNERFSEDGYRTVVQGTKKEGC. Residues 333–353 traverse the membrane as a helical segment; the sequence is TILFMMLYFFSMASSIWWVIL. Topologically, residues 354 to 375 are cytoplasmic; sequence SLTWFLAAGMKWGHEAIEANSQ. A helical membrane pass occupies residues 376–396; sequence YFHLAAWAVPAVKTITILAMG. Residues 397–419 lie on the Extracellular side of the membrane; it reads QIDGDLLSGVCFVGLNSLDPLRG. The helical transmembrane segment at 420 to 440 threads the bilayer; the sequence is FVLAPLFVYLFIGTSFLLAGF. At 441–466 the chain is on the cytoplasmic side; the sequence is VSLFRIRTIMKHDGTKTEKLERLMVR. The helical transmembrane segment at 467-487 threads the bilayer; sequence IGVFSVLYTVPATIVIACYFY. Topologically, residues 488 to 524 are extracellular; sequence EQAFREHWERSWVSQHCKSLAIPCPAHYTPRMSPDFT. A helical membrane pass occupies residues 525–545; sequence VYMIKYLMTLIVGITSGFWIW. At 546-570 the chain is on the cytoplasmic side; it reads SGKTLHSWRKFYTRLTNSRHGETTV. Residues 548–553 carry the Lys-Thr-X-X-X-Trp motif, mediates interaction with the PDZ domain of Dvl family members motif; the sequence is KTLHSW. The PDZ-binding signature appears at 568–570; the sequence is TTV.

The protein belongs to the G-protein coupled receptor Fz/Smo family. Ubiquitinated by ZNRF3, leading to its degradation by the proteasome. Expressed in embryonic and adult heart, lung, chondrocytes and brain. Also expressed in the developing gastrointestinal tract (strongest in foregut), much weaker expression in the adult. No expression in fetal liver and adult spleen. Up-regulated in esophageal squamous cell carcinomas.

The protein resides in the membrane. The protein localises to the cell membrane. In terms of biological role, receptor for Wnt proteins. Most of frizzled receptors are coupled to the beta-catenin canonical signaling pathway, which leads to the activation of disheveled proteins, inhibition of GSK-3 kinase, nuclear accumulation of beta-catenin and activation of Wnt target genes. A second signaling pathway involving PKC and calcium fluxes has been seen for some family members, but it is not yet clear if it represents a distinct pathway or if it can be integrated in the canonical pathway, as PKC seems to be required for Wnt-mediated inactivation of GSK-3 kinase. Both pathways seem to involve interactions with G-proteins. May be involved in transduction and intercellular transmission of polarity information during tissue morphogenesis and/or in differentiated tissues. The chain is Frizzled-2 (Fzd2) from Mus musculus (Mouse).